The chain runs to 542 residues: Multidrug transporter DTR1 (542 aa).

N-linked (GlcNAc...) asparagine glycans are attached at residues Asn6 and Asn46. Residues 80 to 100 (LIFLIVIYNGFLGPLAGNVFI) traverse the membrane as a helical segment. Residues Asn111 and Asn118 are each glycosylated (N-linked (GlcNAc...) asparagine). Transmembrane regions (helical) follow at residues 119 to 139 (ATVS…GALA), 146 to 166 (ILYI…ASVP), 169 to 189 (IGSL…VISL), 210 to 230 (FMLG…LILL), and 237 to 257 (WLFG…ILLL). The N-linked (GlcNAc...) asparagine glycan is linked to Asn274. The next 4 helical transmembrane spans lie at 332–352 (IMTF…FCTY), 374–394 (IGAC…IGGH), 419–439 (ILTV…GWCI), and 441–461 (FHYH…GLTW). Asn463 carries an N-linked (GlcNAc...) asparagine glycan. The next 2 helical transmembrane spans lie at 481-501 (AIAV…ALIA) and 511-531 (FCFL…LVLI).

It belongs to the major facilitator superfamily. CAR1 family.

It localises to the cell membrane. Its function is as follows. Plasma membrane acetic acid exporter, relieving the stress induced upon cells within hemocytes, and thus enabling increased proliferation and virulence against Galleria mellonella larvae. Confers resistance to weak acid and oxidative stress, but not to antifungal drugs. The polypeptide is Multidrug transporter DTR1 (Candida glabrata (strain ATCC 2001 / BCRC 20586 / JCM 3761 / NBRC 0622 / NRRL Y-65 / CBS 138) (Yeast)).